The sequence spans 112 residues: Putative acyl carrier protein, mitochondrial (112 aa).

A mitochondrion-targeting transit peptide spans methionine 1–tyrosine 28. A Carrier domain is found at proline 33–proline 109. At serine 69 the chain carries O-(pantetheine 4'-phosphoryl)serine.

This sequence belongs to the acyl carrier protein (ACP) family. Post-translationally, 4'-phosphopantetheine is transferred from CoA to a specific serine of apo-ACP by acpS. This modification is essential for activity because fatty acids are bound in thioester linkage to the sulfhydryl of the prosthetic group.

The protein localises to the mitochondrion. It functions in the pathway lipid metabolism; fatty acid biosynthesis. Its function is as follows. Carrier of the growing fatty acid chain in fatty acid biosynthesis. May be involved in the synthesis of very-long-chain fatty acids. The sequence is that of Putative acyl carrier protein, mitochondrial from Schizosaccharomyces pombe (strain 972 / ATCC 24843) (Fission yeast).